Consider the following 72-residue polypeptide: Penaeidin-2a (72 aa).

Residues 1-21 (MRLVVCLVFLASFALVCQGEA) form the signal peptide. Disulfide bonds link Cys-45/Cys-59, Cys-48/Cys-66, and Cys-60/Cys-67. Lys-71 is modified (lysine amide).

Higher expression in hemocytes and to a lesser extent in heart, testis, gills, intestine, lymphoid organ and hepatopancreas. Traces in eyes and subcuticular epithelium. Not present in the brain.

Its subcellular location is the cytoplasmic granule. Functionally, antibacterial activity against M.luteus and E.coli bacteria. Antifungal activity against N.crassa and F.oxysporum. Presents chitin-binding activity. This Penaeus vannamei (Whiteleg shrimp) protein is Penaeidin-2a.